The chain runs to 475 residues: Gamma-aminobutyric acid receptor subunit gamma-2 (475 aa).

The first 39 residues, Met1–Ser39, serve as a signal peptide directing secretion. Residues Gln40–Phe275 lie on the Extracellular side of the membrane. N-linked (GlcNAc...) asparagine glycosylation is found at Asn52 and Asn129. Cys190 and Cys204 are disulfide-bonded. N-linked (GlcNAc...) asparagine glycosylation occurs at Asn247. A helical transmembrane segment spans residues Thr276–Ile296. Residues Asn297–Pro302 are Cytoplasmic-facing. A helical transmembrane segment spans residues Ala303–Ala322. Over Arg323 to Ala334 the chain is Extracellular. Residues Met335–Phe359 form a helical membrane-spanning segment. The Cytoplasmic segment spans residues Val360–Ser451. Positions Arg433–Asp450 are interaction with GABARAP. Residues Tyr452 to Tyr472 form a helical membrane-spanning segment. Over Leu473–Leu475 the chain is Extracellular.

This sequence belongs to the ligand-gated ion channel (TC 1.A.9) family. Gamma-aminobutyric acid receptor (TC 1.A.9.5) subfamily. GABRG2 sub-subfamily. Heteropentamer, formed by a combination of alpha (GABRA1-6), beta (GABRB1-3), gamma (GABRG1-3), delta (GABRD), epsilon (GABRE), rho (GABRR1-3), pi (GABRP) and theta (GABRQ) chains, each subunit exhibiting distinct physiological and pharmacological properties. Interacts with GABARAP. Interacts with KIF21B. Identified in a complex of 720 kDa composed of LHFPL4, NLGN2, GABRA1, GABRB2, GABRG2 and GABRB3. Interacts with LHFPL4. Interacts with SHISA7; interaction leads to the regulation of GABA(A) receptor trafficking, channel deactivation kinetics and pharmacology. Post-translationally, palmitoylated by ZDHHC3/GODZ; required for the accumulation of GABA(A) receptors at the postsynaptic membrane of inhibitory GABAergic synapses.

The protein resides in the postsynaptic cell membrane. It is found in the cell membrane. It localises to the cell projection. Its subcellular location is the dendrite. The protein localises to the cytoplasmic vesicle membrane. It carries out the reaction chloride(in) = chloride(out). Its activity is regulated as follows. Allosterically activated by benzodiazepines. Activated by pentobarbital. Potentiated by etomidate, propofol, pregnanolone. Inhibited by the antagonist bicuculline. Inhibited by zinc ions. Potentiated by histamine. Gamma subunit of the heteropentameric ligand-gated chloride channel gated by gamma-aminobutyric acid (GABA), a major inhibitory neurotransmitter in the brain. GABA-gated chloride channels, also named GABA(A) receptors (GABAAR), consist of five subunits arranged around a central pore and contain GABA active binding site(s) located at the alpha and beta subunit interface(s). When activated by GABA, GABAARs selectively allow the flow of chloride anions across the cell membrane down their electrochemical gradient. Gamma-2/GABRG2-containing GABAARs are found at both synaptic and extrasynaptic sites. Chloride influx into the postsynaptic neuron following GABAAR opening decreases the neuron ability to generate a new action potential, thereby reducing nerve transmission. GABAARs containing alpha-1 and beta-2 or -3 subunits exhibit synaptogenic activity; the gamma-2 subunit being necessary but not sufficient to induce rapid synaptic contacts formation. Extrasynaptic gamma-2-containing receptors contribute to the tonic GABAergic inhibition. GABAARs function also as histamine receptor where histamine binds at the interface of two neighboring beta subunits and potentiates GABA response in a gamma-2 subunit-controlled manner. The protein is Gamma-aminobutyric acid receptor subunit gamma-2 of Homo sapiens (Human).